The chain runs to 297 residues: Protein PecM (297 aa).

A run of 10 helical transmembrane segments spans residues 6 to 26, 38 to 58, 60 to 80, 86 to 106, 116 to 136, 138 to 158, 167 to 187, 203 to 223, 231 to 251, and 261 to 281; these read FAFYAPCVWGTTYFVTTQFLP, ALPAGIILILGKNLPPVGWLW, LFVLGALNIGVFFVMLFFAAY, VVALVGSLQPLIVILLSFLLL, VAAVAGGIGIVLLISLPKAPL, PAGLVASALATMSMASGLVLT, MTMLTFTGWQLFCGGLVILPV, LAGYLYLAIPGSLLAYFMWFS, VIMSLLGFLSPLVALLLGFLF, and LVGVVFIFSALIIVQDISLFS. 2 consecutive EamA domains span residues 12-130 and 149-276; these read CVWG…LLIS and MSMA…IVQD.

This sequence belongs to the EamA transporter family.

The protein resides in the cell membrane. Its function is as follows. Involved in pectinase, cellulase, and blue pigment regulation. This Dickeya dadantii (strain 3937) (Erwinia chrysanthemi (strain 3937)) protein is Protein PecM (pecM).